The chain runs to 108 residues: Protein U4 (108 aa).

The helical transmembrane segment at 5 to 25 (FLLFSLLFVVFLQPALVFNMV) threads the bilayer.

The protein belongs to the nanovirus U4 protein family.

The protein localises to the membrane. This is Protein U4 (DNA-U4) from Astragalus sinicus (Chinese milk vetch).